A 335-amino-acid chain; its full sequence is MQRPLTEAEAADAMRVIMRGEATAAQIAAFALAVTVRGASADNLAGMARAAQEFATPVPRAGGDLLDTCGTGGDGLNTFNISTAAAIVAAACGVRVAKHGNRSASSACGSADVLEELGVRIDLGAEEAAACLDRTGITFLFAPVFHPAFRHTAGPRRELGARTVFNLLGPLCNPSGARLRTLGVPSRELVEPMTEVLERLGVTRALVFHSADGMDELSTAAPAHLVELRDGRRTTHRFDPAEHGLARSRPGDLAGGDRAVNAAVLRRVLAGGRGPARDVVLLNAAAALRVAGVAGTWSDGLRLAASAVDGGAAAGLLDRWAHASWQRADLVEVPA.

5-phospho-alpha-D-ribose 1-diphosphate-binding positions include G70, 73–74 (GD), T78, 80–83 (NIST), 98–106 (KHGNRSASS), and S110. G70 provides a ligand contact to anthranilate. S82 is a binding site for Mg(2+). N101 provides a ligand contact to anthranilate. R156 contacts anthranilate. Residues D215 and E216 each contribute to the Mg(2+) site.

It belongs to the anthranilate phosphoribosyltransferase family. As to quaternary structure, homodimer. Requires Mg(2+) as cofactor.

The catalysed reaction is N-(5-phospho-beta-D-ribosyl)anthranilate + diphosphate = 5-phospho-alpha-D-ribose 1-diphosphate + anthranilate. The protein operates within amino-acid biosynthesis; L-tryptophan biosynthesis; L-tryptophan from chorismate: step 2/5. Catalyzes the transfer of the phosphoribosyl group of 5-phosphorylribose-1-pyrophosphate (PRPP) to anthranilate to yield N-(5'-phosphoribosyl)-anthranilate (PRA). The protein is Anthranilate phosphoribosyltransferase 2 of Streptomyces coelicolor (strain ATCC BAA-471 / A3(2) / M145).